We begin with the raw amino-acid sequence, 206 residues long: Large ribosomal subunit protein uL4 (206 aa).

Over residues 66 to 77 (QKGTGRARHHSA) the composition is skewed to basic residues. The disordered stretch occupies residues 66–96 (QKGTGRARHHSARAPQFRGGGQAHGPVVRSH).

This sequence belongs to the universal ribosomal protein uL4 family. In terms of assembly, part of the 50S ribosomal subunit.

One of the primary rRNA binding proteins, this protein initially binds near the 5'-end of the 23S rRNA. It is important during the early stages of 50S assembly. It makes multiple contacts with different domains of the 23S rRNA in the assembled 50S subunit and ribosome. Its function is as follows. Forms part of the polypeptide exit tunnel. In Brucella anthropi (strain ATCC 49188 / DSM 6882 / CCUG 24695 / JCM 21032 / LMG 3331 / NBRC 15819 / NCTC 12168 / Alc 37) (Ochrobactrum anthropi), this protein is Large ribosomal subunit protein uL4.